We begin with the raw amino-acid sequence, 128 residues long: Sirohydrochlorin cobaltochelatase (128 aa).

The active-site Proton acceptor is histidine 9. Co(2+) is bound at residue histidine 9. Substrate-binding positions include lysine 43 and 68–73; that span reads FATGTH. Histidine 73 contributes to the Co(2+) binding site.

It belongs to the CbiX family. CbiXS subfamily. In terms of assembly, homotetramer; dimer of dimers.

It catalyses the reaction Co-sirohydrochlorin + 2 H(+) = sirohydrochlorin + Co(2+). Its pathway is cofactor biosynthesis; adenosylcobalamin biosynthesis; cob(II)yrinate a,c-diamide from sirohydrochlorin (anaerobic route): step 1/10. Functionally, catalyzes the insertion of Co(2+) into sirohydrochlorin as part of the anaerobic pathway to cobalamin biosynthesis. The chain is Sirohydrochlorin cobaltochelatase from Saccharolobus solfataricus (strain ATCC 35092 / DSM 1617 / JCM 11322 / P2) (Sulfolobus solfataricus).